Reading from the N-terminus, the 484-residue chain is ATP synthase subunit beta (484 aa).

The disordered stretch occupies residues 104-123 (ERGPIGSKQTMPIHADAPPF). Residue 156–163 (GGAGVGKT) coordinates ATP.

This sequence belongs to the ATPase alpha/beta chains family. As to quaternary structure, F-type ATPases have 2 components, CF(1) - the catalytic core - and CF(0) - the membrane proton channel. CF(1) has five subunits: alpha(3), beta(3), gamma(1), delta(1), epsilon(1). CF(0) has three main subunits: a(1), b(2) and c(9-12). The alpha and beta chains form an alternating ring which encloses part of the gamma chain. CF(1) is attached to CF(0) by a central stalk formed by the gamma and epsilon chains, while a peripheral stalk is formed by the delta and b chains.

It is found in the cell inner membrane. The catalysed reaction is ATP + H2O + 4 H(+)(in) = ADP + phosphate + 5 H(+)(out). Functionally, produces ATP from ADP in the presence of a proton gradient across the membrane. The catalytic sites are hosted primarily by the beta subunits. The polypeptide is ATP synthase subunit beta (Zymomonas mobilis subsp. mobilis (strain ATCC 31821 / ZM4 / CP4)).